We begin with the raw amino-acid sequence, 343 residues long: Dihydroorotase (343 aa).

Residues His-13 and His-15 each coordinate Zn(2+). Residues 15-17 (HLR) and Asn-41 each bind substrate. Zn(2+) is bound by residues Lys-99, His-136, and His-174. Lys-99 is modified (N6-carboxylysine). His-136 provides a ligand contact to substrate. Leu-219 lines the substrate pocket. Asp-247 contributes to the Zn(2+) binding site. Residue Asp-247 is part of the active site. 2 residues coordinate substrate: His-251 and Ala-263.

It belongs to the metallo-dependent hydrolases superfamily. DHOase family. Class II DHOase subfamily. As to quaternary structure, homodimer. Zn(2+) serves as cofactor.

The catalysed reaction is (S)-dihydroorotate + H2O = N-carbamoyl-L-aspartate + H(+). It functions in the pathway pyrimidine metabolism; UMP biosynthesis via de novo pathway; (S)-dihydroorotate from bicarbonate: step 3/3. Its function is as follows. Catalyzes the reversible cyclization of carbamoyl aspartate to dihydroorotate. The polypeptide is Dihydroorotase (Shewanella baltica (strain OS155 / ATCC BAA-1091)).